We begin with the raw amino-acid sequence, 261 residues long: tRNA pseudouridine synthase A (261 aa).

Asp-51 functions as the Nucleophile in the catalytic mechanism. Tyr-109 is a substrate binding site.

It belongs to the tRNA pseudouridine synthase TruA family. Homodimer.

It catalyses the reaction uridine(38/39/40) in tRNA = pseudouridine(38/39/40) in tRNA. Its function is as follows. Formation of pseudouridine at positions 38, 39 and 40 in the anticodon stem and loop of transfer RNAs. The chain is tRNA pseudouridine synthase A from Psychromonas ingrahamii (strain DSM 17664 / CCUG 51855 / 37).